Here is a 321-residue protein sequence, read N- to C-terminus: Methionyl-tRNA formyltransferase (321 aa).

112-115 (SILP) is a (6S)-5,6,7,8-tetrahydrofolate binding site.

This sequence belongs to the Fmt family.

It carries out the reaction L-methionyl-tRNA(fMet) + (6R)-10-formyltetrahydrofolate = N-formyl-L-methionyl-tRNA(fMet) + (6S)-5,6,7,8-tetrahydrofolate + H(+). Functionally, attaches a formyl group to the free amino group of methionyl-tRNA(fMet). The formyl group appears to play a dual role in the initiator identity of N-formylmethionyl-tRNA by promoting its recognition by IF2 and preventing the misappropriation of this tRNA by the elongation apparatus. This is Methionyl-tRNA formyltransferase from Shewanella pealeana (strain ATCC 700345 / ANG-SQ1).